The primary structure comprises 344 residues: DNA-directed RNA polymerase subunit alpha (344 aa).

Residues 1 to 238 are alpha N-terminal domain (alpha-NTD); sequence MKVIKTAPLI…KQLGVFGERP (238 aa). The segment at 254 to 344 is alpha C-terminal domain (alpha-CTD); sequence AKDLSAKIES…EKLEDKGGND (91 aa).

This sequence belongs to the RNA polymerase alpha chain family. Homodimer. The RNAP catalytic core consists of 2 alpha, 1 beta, 1 beta' and 1 omega subunit. When a sigma factor is associated with the core the holoenzyme is formed, which can initiate transcription.

The catalysed reaction is RNA(n) + a ribonucleoside 5'-triphosphate = RNA(n+1) + diphosphate. In terms of biological role, DNA-dependent RNA polymerase catalyzes the transcription of DNA into RNA using the four ribonucleoside triphosphates as substrates. The chain is DNA-directed RNA polymerase subunit alpha from Helicobacter pylori (strain ATCC 700392 / 26695) (Campylobacter pylori).